The sequence spans 84 residues: Small ribosomal subunit protein bS20 (84 aa).

Belongs to the bacterial ribosomal protein bS20 family.

Binds directly to 16S ribosomal RNA. The sequence is that of Small ribosomal subunit protein bS20 from Porphyromonas gingivalis (strain ATCC 33277 / DSM 20709 / CIP 103683 / JCM 12257 / NCTC 11834 / 2561).